The following is a 517-amino-acid chain: MALTLASAADLLKEHHLLREIIQGDVWTDDPARIASADEPFAGITYDTRKVTPGTLLCCKGQFKAEYLNGIDEAGLAAYVAETEYSAATATPGLIVNDARKAMSLLSAAFYGYPQNELTVIGVTGTKGKTTTSYFTQALINAVSGGKAALFSSVDNCLDGHTYVESDLTTPESMDAFRMMREAADNGMKYLVMEVSSQAYKVDRVYGLTFDVAAFLNISPDHISPIEHPTFEDYLYCKRQIIVNAKSLVLGADSLHADLLREDAEAAGIGVTTFALHDADNAGTSADVVAWPADPAHASFHIADGDQALGDYHLSIDGDFNYLNAAAAIAIAHAVGVSLDDADALHAIESVRIAGRMEQFRDPQSNTLAIVDYAHNYASVTALLDFVYERWGEENPRITLVTGSAGNKAYDRRKEIVEAAENRIANFIFTAEDTDTEPIIDICMEMQGYITNKDVVSTVISDRLTAITNAIYDARAHADRFNILLIIGKGNERWIKDHRKHVPFDGDDHVVERMFGL.

Position 48 (T48) interacts with UDP-N-acetyl-alpha-D-muramoyl-L-alanyl-D-glutamate. Position 125-131 (125-131) interacts with ATP; the sequence is GTKGKTT. UDP-N-acetyl-alpha-D-muramoyl-L-alanyl-D-glutamate is bound by residues 169 to 170, S196, and R204; that span reads TT. K238 bears the N6-carboxylysine mark.

The protein belongs to the MurCDEF family. MurE subfamily. Carboxylation is probably crucial for Mg(2+) binding and, consequently, for the gamma-phosphate positioning of ATP.

The protein resides in the cytoplasm. It participates in cell wall biogenesis; peptidoglycan biosynthesis. Catalyzes the addition of an amino acid to the nucleotide precursor UDP-N-acetylmuramoyl-L-alanyl-D-glutamate (UMAG) in the biosynthesis of bacterial cell-wall peptidoglycan. The sequence is that of UDP-N-acetylmuramyl-tripeptide synthetase from Bifidobacterium longum (strain NCC 2705).